Consider the following 946-residue polypeptide: MKPLSSPLQQYWQTVVERLPEPLAEESLSAQAKSVLTFSDFLQDSIIAHPEWLTELESQPPQADEWQHYAAWLQEALSNVSDEAGLMRELRLFRRRIMVRIAWAQTLALVTEESILQQLSHLAETLIVAARDWLYDACCREWGTPCNAQGEAQPLLILGMGKLGGGELNFSSDIDLIFAWPEHGCTQGGRRELDNAQFFTRMGQRLIKVQDQPTQDGFVYRVDMRLRPFGESGPLVLSFAALEDYYQEQGRDWERYAMVKARIMGDSDGVYANELRAMLRPFVFRRYIDFSVIQSLRNMKGMIAREVRRRGLTDNIKLGAGGIREIEFIVQVFQLIRGGREPSLQSRSLLPTLSAIAALHLLSENDAEQLRVAYLFLRRLENLLQSINDEQTQTLPFDELNRARLAWAMDFADWPQLTGVLTAHMANVRRVFNELIGDDESETQEESLSEQWRELWQDALQEDDTTPVLAHLSEDDRKQVLMLIADFRKELDKRTIGPRGRQVLDHLMPHLLSDVCAREDAAVTLSRITALLVGIVTRTTYLELLSEFPAALKHLISLCAASPMIASQLARYPLLLDELLDPNTLYQPTATDAYRDELRQYLLRVPEDDEEQQLEALRQFKQAQLLRIAAADIAGTLPVMKVSDHLTWLAEAMIDAVVQQAWVQMVARYGKPNHLNEREGRGFAVVGYGKLGGWELGYSSDLDLIFLHDCPMDAMTDGEREIDGRQFYLRLAQRIMHLFSTRTSSGILYEVDARLRPSGAAGMLVTSAEAFADYQKNEAWTWEHQALVRARVVYGDPQLTAHFDAVRREIMTLPREGKTLQTEVREMREKMRAHLGNKHRDRFDIKADEGGITDIEFITQYLVLRYAHEKPKLTRWSDNVRILELLAQNDIMEEQEAMALTRAYTTLRDELHHLALQELPGHVSEDCFTAERELVRASWQKWLVEE.

The segment at 1-440 (MKPLSSPLQQ…VFNELIGDDE (440 aa)) is adenylyl removase. Residues 449 to 946 (SEQWRELWQD…ASWQKWLVEE (498 aa)) form an adenylyl transferase region.

Belongs to the GlnE family. Requires Mg(2+) as cofactor.

The enzyme catalyses [glutamine synthetase]-O(4)-(5'-adenylyl)-L-tyrosine + phosphate = [glutamine synthetase]-L-tyrosine + ADP. It catalyses the reaction [glutamine synthetase]-L-tyrosine + ATP = [glutamine synthetase]-O(4)-(5'-adenylyl)-L-tyrosine + diphosphate. In terms of biological role, involved in the regulation of glutamine synthetase GlnA, a key enzyme in the process to assimilate ammonia. When cellular nitrogen levels are high, the C-terminal adenylyl transferase (AT) inactivates GlnA by covalent transfer of an adenylyl group from ATP to specific tyrosine residue of GlnA, thus reducing its activity. Conversely, when nitrogen levels are low, the N-terminal adenylyl removase (AR) activates GlnA by removing the adenylyl group by phosphorolysis, increasing its activity. The regulatory region of GlnE binds the signal transduction protein PII (GlnB) which indicates the nitrogen status of the cell. This is Bifunctional glutamine synthetase adenylyltransferase/adenylyl-removing enzyme from Escherichia coli O127:H6 (strain E2348/69 / EPEC).